We begin with the raw amino-acid sequence, 166 residues long: MTESTSRRPAYARLLDRAVRILAVRDHSEQELRRKLVAPIMGKNGPEEIDATAEDYERVIAWCHEHGYLDDSRFVARFIASRSRKGYGPARIRQELNQKGISREATEKAMRECDIDWCALARDHATRKYDEPLPTVFSEKVKIQRFLLYRGYLMEDIQDIWRNFAD.

It belongs to the RecX family.

It is found in the cytoplasm. Functionally, modulates RecA activity. This Shigella dysenteriae serotype 1 (strain Sd197) protein is Regulatory protein RecX.